The sequence spans 326 residues: Peroxidase 6 (326 aa).

The first 20 residues, 1–20 (MKSFGLCLFILVSSPCLLQA), serve as a signal peptide directing secretion. N21 is a glycosylation site (N-linked (GlcNAc...) asparagine). Cystine bridges form between C31–C112, C64–C69, C118–C318, and C197–C228. H62 serves as the catalytic Proton acceptor. Ca(2+) contacts are provided by D63, V66, G68, D70, and S72. The N-linked (GlcNAc...) asparagine glycan is linked to N163. Heme b is bound at residue H190. T191 provides a ligand contact to Ca(2+). N206 and N230 each carry an N-linked (GlcNAc...) asparagine glycan. The Ca(2+) site is built by D242, T245, and D250. N-linked (GlcNAc...) asparagine glycosylation occurs at N274.

Belongs to the peroxidase family. Classical plant (class III) peroxidase subfamily. Heme b serves as cofactor. Requires Ca(2+) as cofactor.

Its subcellular location is the secreted. The enzyme catalyses 2 a phenolic donor + H2O2 = 2 a phenolic radical donor + 2 H2O. Its function is as follows. Removal of H(2)O(2), oxidation of toxic reductants, biosynthesis and degradation of lignin, suberization, auxin catabolism, response to environmental stresses such as wounding, pathogen attack and oxidative stress. These functions might be dependent on each isozyme/isoform in each plant tissue. This is Peroxidase 6 (PER6) from Arabidopsis thaliana (Mouse-ear cress).